Reading from the N-terminus, the 802-residue chain is DEAD-box ATP-dependent RNA helicase 28 (802 aa).

Residues 1–179 are disordered; sequence MDADFRFDPD…TDKKSGVVDP (179 aa). 2 stretches are compositionally biased toward acidic residues: residues 76 to 131 and 138 to 169; these read GDSE…EELE and KSDE…EEEE. Coiled-coil stretches lie at residues 90–122 and 149–174; these read DSEE…GVEV and QDGE…DKKS. Residues 194–222 carry the Q motif motif; sequence NSFLELNLSRPLLRACEALGYQKPTPIQA. Positions 225–399 constitute a Helicase ATP-binding domain; the sequence is IPLALTGRDI…TLSLNKPVRL (175 aa). Position 238–245 (238–245) interacts with ATP; it reads AITGSGKT. The DEAD box motif lies at 347 to 350; the sequence is DEAD. One can recognise a Helicase C-terminal domain in the interval 429–573; the sequence is VLLALCLKTF…SRIVAEKPVA (145 aa). The stretch at 572–616 forms a coiled coil; sequence VAECAKLIEELEDQISTIIQEEREERILRKAEMEATKAENMIAHK. The disordered stretch occupies residues 639 to 802; the sequence is KAAKESTSQG…KSKSRYNRRK (164 aa). The span at 644 to 659 shows a compositional bias: polar residues; that stretch reads STSQGKSNSGVISAQQ. The segment covering 666–684 has biased composition (basic residues); it reads KEKKRREREKNLPRKKRRR. The stretch at 671 to 712 forms a coiled coil; it reads REREKNLPRKKRRRLEAEREMLEDESEDEEEAKESKGGKKEK. A compositionally biased stretch (acidic residues) spans 691–702; it reads MLEDESEDEEEA. The segment covering 776-802 has biased composition (basic residues); it reads RSLKKNNVMRKKSKNSFKSKSRYNRRK.

It belongs to the DEAD box helicase family. DDX27/DRS1 subfamily.

It catalyses the reaction ATP + H2O = ADP + phosphate + H(+). This chain is DEAD-box ATP-dependent RNA helicase 28, found in Oryza sativa subsp. japonica (Rice).